A 253-amino-acid polypeptide reads, in one-letter code: Triosephosphate isomerase, cytosolic (253 aa).

Positions 10 and 12 each coordinate substrate. The Electrophile role is filled by histidine 96. Glutamate 166 serves as the catalytic Proton acceptor.

It belongs to the triosephosphate isomerase family. In terms of assembly, homodimer.

The protein resides in the cytoplasm. The enzyme catalyses D-glyceraldehyde 3-phosphate = dihydroxyacetone phosphate. It participates in carbohydrate biosynthesis; gluconeogenesis. The protein operates within carbohydrate degradation; glycolysis; D-glyceraldehyde 3-phosphate from glycerone phosphate: step 1/1. The polypeptide is Triosephosphate isomerase, cytosolic (TPI) (Oryza sativa subsp. japonica (Rice)).